The sequence spans 547 residues: Solute carrier family 22 member 7 (547 aa).

A helical transmembrane segment spans residues 21-41 (VALLALPRVLLPMHFLLPIFL). Residues 91–103 (NSTLWGEGQNSGE) show a composition bias toward polar residues. The tract at residues 91–112 (NSTLWGEGQNSGEQPEGEPSTV) is disordered. Transmembrane regions (helical) follow at residues 145-165 (AIST…GYLS), 179-199 (VSSL…MFAI), 203-223 (LTGM…LEWL), 233-253 (VLSS…GYLI), 258-278 (WLLL…WWVP), 345-365 (ISLC…GVSL), 367-387 (LSGL…VELP), 403-423 (LTMA…ILVS), 431-451 (TALA…AYLF), 465-485 (MGLT…AALL), and 492-512 (LPKL…LLLP). Positions 521-547 (ETIQDVERKSAPSSLQEEEMPMKQVQD) are disordered.

This sequence belongs to the major facilitator (TC 2.A.1) superfamily. Organic cation transporter (TC 2.A.1.19) family.

It localises to the basolateral cell membrane. It is found in the apical cell membrane. The protein localises to the cell membrane. It carries out the reaction orotate(out) + L-glutamate(in) = orotate(in) + L-glutamate(out). The catalysed reaction is 3',5'-cyclic GMP(in) = 3',5'-cyclic GMP(out). The enzyme catalyses GMP(in) = GMP(out). It catalyses the reaction 2'-deoxyguanosine(in) = 2'-deoxyguanosine(out). It carries out the reaction GDP(in) = GDP(out). The catalysed reaction is guanosine(in) = guanosine(out). The enzyme catalyses GTP(in) = GTP(out). It catalyses the reaction 3',5'-cyclic AMP(in) = 3',5'-cyclic AMP(out). It carries out the reaction creatinine(in) = creatinine(out). The catalysed reaction is prostaglandin E2(out) = prostaglandin E2(in). The enzyme catalyses 2-oxoglutarate(in) = 2-oxoglutarate(out). It catalyses the reaction glutarate(in) = glutarate(out). It carries out the reaction urate(out) = urate(in). The catalysed reaction is estrone 3-sulfate(out) = estrone 3-sulfate(in). Functionally, functions as a Na(+)-independent bidirectional multispecific transporter. Contributes to the renal and hepatic elimination of endogenous organic compounds from the systemic circulation into the urine and bile, respectively. Capable of transporting a wide range of purine and pyrimidine nucleobases, nucleosides and nucleotides, with cGMP, 2'deoxyguanosine and GMP being the preferred substrates. Functions as a pH- and chloride-independent cGMP bidirectional facilitative transporter that can regulate both intracellular and extracellular levels of cGMP and may be involved in cGMP signaling pathways. Mediates orotate/glutamate bidirectional exchange and most likely display a physiological role in hepatic release of glutamate into the blood. Involved in renal secretion and possible reabsorption of creatinine. Able to uptake prostaglandin E2 (PGE2) and may contribute to PGE2 renal excretion. Also transports alpha-ketoglutarate and urate. Apart from the orotate/glutamate exchange, the counterions for the uptake of other SLC22A7/OAT2 substrates remain to be identified. The chain is Solute carrier family 22 member 7 (SLC22A7) from Bos taurus (Bovine).